Consider the following 288-residue polypeptide: Proteasome subunit beta (288 aa).

The propeptide at 1-57 is removed in mature form; by autocatalysis; that stretch reads MTAGDPMRLHPGHALSSFTEHLRALAPELLGPNRFAALDGATGSSGGTGAKDIAPHG. The active-site Nucleophile is Thr-58.

It belongs to the peptidase T1B family. As to quaternary structure, the 20S proteasome core is composed of 14 alpha and 14 beta subunits that assemble into four stacked heptameric rings, resulting in a barrel-shaped structure. The two inner rings, each composed of seven catalytic beta subunits, are sandwiched by two outer rings, each composed of seven alpha subunits. The catalytic chamber with the active sites is on the inside of the barrel. Has a gated structure, the ends of the cylinder being occluded by the N-termini of the alpha-subunits. Is capped by the proteasome-associated ATPase, ARC.

The protein localises to the cytoplasm. It carries out the reaction Cleavage of peptide bonds with very broad specificity.. It functions in the pathway protein degradation; proteasomal Pup-dependent pathway. The formation of the proteasomal ATPase ARC-20S proteasome complex, likely via the docking of the C-termini of ARC into the intersubunit pockets in the alpha-rings, may trigger opening of the gate for substrate entry. Interconversion between the open-gate and close-gate conformations leads to a dynamic regulation of the 20S proteasome proteolysis activity. Its function is as follows. Component of the proteasome core, a large protease complex with broad specificity involved in protein degradation. This chain is Proteasome subunit beta, found in Nocardia farcinica (strain IFM 10152).